The chain runs to 252 residues: Imidazole glycerol phosphate synthase subunit HisF (252 aa).

Catalysis depends on residues Asp-11 and Asp-130.

It belongs to the HisA/HisF family. In terms of assembly, heterodimer of HisH and HisF.

Its subcellular location is the cytoplasm. The enzyme catalyses 5-[(5-phospho-1-deoxy-D-ribulos-1-ylimino)methylamino]-1-(5-phospho-beta-D-ribosyl)imidazole-4-carboxamide + L-glutamine = D-erythro-1-(imidazol-4-yl)glycerol 3-phosphate + 5-amino-1-(5-phospho-beta-D-ribosyl)imidazole-4-carboxamide + L-glutamate + H(+). It functions in the pathway amino-acid biosynthesis; L-histidine biosynthesis; L-histidine from 5-phospho-alpha-D-ribose 1-diphosphate: step 5/9. Its function is as follows. IGPS catalyzes the conversion of PRFAR and glutamine to IGP, AICAR and glutamate. The HisF subunit catalyzes the cyclization activity that produces IGP and AICAR from PRFAR using the ammonia provided by the HisH subunit. This is Imidazole glycerol phosphate synthase subunit HisF from Dictyoglomus turgidum (strain DSM 6724 / Z-1310).